Here is a 702-residue protein sequence, read N- to C-terminus: Polyribonucleotide nucleotidyltransferase (702 aa).

Mg(2+)-binding residues include D485 and D491. Residues 552 to 611 form the KH domain; the sequence is PKTSTLQIDPEKIRDVIGAGGKVINKIIADTGVKIDIKEDGLVYVSSAESEGVKEAVKII. Residues 621 to 689 form the S1 motif domain; it reads GEIYLGKVTK…SQGRINLSRK (69 aa).

This sequence belongs to the polyribonucleotide nucleotidyltransferase family. Requires Mg(2+) as cofactor.

The protein resides in the cytoplasm. The enzyme catalyses RNA(n+1) + phosphate = RNA(n) + a ribonucleoside 5'-diphosphate. Its function is as follows. Involved in mRNA degradation. Catalyzes the phosphorolysis of single-stranded polyribonucleotides processively in the 3'- to 5'-direction. The chain is Polyribonucleotide nucleotidyltransferase from Clostridium perfringens (strain SM101 / Type A).